Reading from the N-terminus, the 300-residue chain is 33 kDa chaperonin (300 aa).

Intrachain disulfides connect cysteine 235–cysteine 237 and cysteine 269–cysteine 272.

This sequence belongs to the HSP33 family. Post-translationally, under oxidizing conditions two disulfide bonds are formed involving the reactive cysteines. Under reducing conditions zinc is bound to the reactive cysteines and the protein is inactive.

The protein resides in the cytoplasm. Its function is as follows. Redox regulated molecular chaperone. Protects both thermally unfolding and oxidatively damaged proteins from irreversible aggregation. Plays an important role in the bacterial defense system toward oxidative stress. This is 33 kDa chaperonin from Pseudomonas fluorescens (strain SBW25).